The chain runs to 271 residues: Putative phosphoenolpyruvate synthase regulatory protein (271 aa).

ADP is bound at residue 152–159 (GASRSGKT).

It belongs to the pyruvate, phosphate/water dikinase regulatory protein family. PSRP subfamily.

It carries out the reaction [pyruvate, water dikinase] + ADP = [pyruvate, water dikinase]-phosphate + AMP + H(+). The catalysed reaction is [pyruvate, water dikinase]-phosphate + phosphate + H(+) = [pyruvate, water dikinase] + diphosphate. Its function is as follows. Bifunctional serine/threonine kinase and phosphorylase involved in the regulation of the phosphoenolpyruvate synthase (PEPS) by catalyzing its phosphorylation/dephosphorylation. This chain is Putative phosphoenolpyruvate synthase regulatory protein, found in Marinobacter nauticus (strain ATCC 700491 / DSM 11845 / VT8) (Marinobacter aquaeolei).